The sequence spans 752 residues: Multifunctional tryptophan biosynthesis protein (752 aa).

The region spanning 3-202 (FTLLIDNYDS…IQMKGGKWGG (200 aa)) is the Glutamine amidotransferase type-1 domain. 58 to 60 (GPG) contacts L-glutamine. C86 serves as the catalytic Nucleophile; for GATase activity. An L-glutamine-binding site is contributed by 136–137 (SL). Catalysis depends on for GATase activity residues H176 and E178. The interval 231–495 (ILNRIHAQRL…DTKAFLRSLI (265 aa)) is indole-3-glycerol phosphate synthase. The tract at residues 509–752 (LVKICGIRST…VEAFVKAVRG (244 aa)) is N-(5'-phosphoribosyl)anthranilate isomerase.

The catalysed reaction is N-(5-phospho-beta-D-ribosyl)anthranilate = 1-(2-carboxyphenylamino)-1-deoxy-D-ribulose 5-phosphate. It carries out the reaction 1-(2-carboxyphenylamino)-1-deoxy-D-ribulose 5-phosphate + H(+) = (1S,2R)-1-C-(indol-3-yl)glycerol 3-phosphate + CO2 + H2O. The enzyme catalyses chorismate + L-glutamine = anthranilate + pyruvate + L-glutamate + H(+). Its pathway is amino-acid biosynthesis; L-tryptophan biosynthesis; L-tryptophan from chorismate: step 1/5. It functions in the pathway amino-acid biosynthesis; L-tryptophan biosynthesis; L-tryptophan from chorismate: step 3/5. The protein operates within amino-acid biosynthesis; L-tryptophan biosynthesis; L-tryptophan from chorismate: step 4/5. In terms of biological role, trifunctional enzyme bearing the Gln amidotransferase (GATase) domain of anthranilate synthase, indole-glycerolphosphate synthase, and phosphoribosylanthranilate isomerase activities. The protein is Multifunctional tryptophan biosynthesis protein (TRP1) of Cryptococcus neoformans var. neoformans serotype D (strain B-3501A) (Filobasidiella neoformans).